Consider the following 127-residue polypeptide: DNA-directed RNA polymerase subunit omega (127 aa).

This sequence belongs to the RNA polymerase subunit omega family. The RNAP catalytic core consists of 2 alpha, 1 beta, 1 beta' and 1 omega subunit. When a sigma factor is associated with the core the holoenzyme is formed, which can initiate transcription.

The catalysed reaction is RNA(n) + a ribonucleoside 5'-triphosphate = RNA(n+1) + diphosphate. Promotes RNA polymerase assembly. Latches the N- and C-terminal regions of the beta' subunit thereby facilitating its interaction with the beta and alpha subunits. This chain is DNA-directed RNA polymerase subunit omega, found in Rickettsia canadensis (strain McKiel).